The chain runs to 136 residues: Large ribosomal subunit protein uL16c (136 aa).

This sequence belongs to the universal ribosomal protein uL16 family. Part of the 50S ribosomal subunit.

It localises to the plastid. It is found in the chloroplast. This chain is Large ribosomal subunit protein uL16c, found in Illicium oligandrum (Star anise).